A 330-amino-acid chain; its full sequence is Aspartate--ammonia ligase (330 aa).

Belongs to the class-II aminoacyl-tRNA synthetase family. AsnA subfamily.

The protein resides in the cytoplasm. The catalysed reaction is L-aspartate + NH4(+) + ATP = L-asparagine + AMP + diphosphate + H(+). The protein operates within amino-acid biosynthesis; L-asparagine biosynthesis; L-asparagine from L-aspartate (ammonia route): step 1/1. The polypeptide is Aspartate--ammonia ligase (Yersinia enterocolitica serotype O:8 / biotype 1B (strain NCTC 13174 / 8081)).